Consider the following 588-residue polypeptide: MENAVRDLALKHALINAVKFNGKADVKAVVSKIFADNPELRGNAKQVVEVVKEVVNYVNSLTLDEQRRILEEKWPEALGARRTVEEKRGDIESLPELPDADKLSKLTFRFAPNPDFYLHLGSARPAIVNYAYKLKYANKGKDSRFILRFEDTDPRIKRPLLDAYDAIREDLRWLGVKWDEEYIQSDRMSIYYEYARKLIENGGAYVVAKGSGCEPDDWKRLKIEGKPCLTREAESSRNLELFDKMLEGAFNEGEAIVAVKTDLSSPDPSIRDWVAFRVIDAHKYPHPRVGDKYIVWPTYNFAVAIDDHLMGITHVLRAQEHRVNTVKQYYVFKAFGWEQPYTIHFGRLKIEGLKLSKSILKKLNLTKDDVTLPTLAGLRNRGITPEAIWSLILFVGIKETDATISLKNLYAYNRRVIEPLANRYMFVKNPVKLRLRGVGDLIEAKIPMHPSYPERGIRVIKITGEGGYANVYVQASDVKPGLVVRLMGLGNVKVINVSGNEAEADFIGQSVEDARRSEAPIVQWAPPDAVNAEVIIPVNVGQVTVDNGLAEPAVAKLEQGTVMQFIRYGFVKLMGSSNGKLRLVYIHD.

The 'HIGH' region signature appears at 112 to 122 (PNPDFYLHLGS).

Belongs to the class-I aminoacyl-tRNA synthetase family. Glutamate--tRNA ligase type 2 subfamily.

It localises to the cytoplasm. The enzyme catalyses tRNA(Glu) + L-glutamate + ATP = L-glutamyl-tRNA(Glu) + AMP + diphosphate. Its function is as follows. Catalyzes the attachment of glutamate to tRNA(Glu) in a two-step reaction: glutamate is first activated by ATP to form Glu-AMP and then transferred to the acceptor end of tRNA(Glu). The polypeptide is Glutamate--tRNA ligase (Caldivirga maquilingensis (strain ATCC 700844 / DSM 13496 / JCM 10307 / IC-167)).